Here is a 479-residue protein sequence, read N- to C-terminus: MHVQPTKYHGLVLDLMPNIRLMQGFGHFLFRYVSGPVLIRKLYSWWNLIMILLQYFAIMGNLVMNTGDVNELTANTITTLFFTHSVTKFIYVAVNSEHFYRTLGIWNQPNSHSLFAESDARYHSIALAKMRKLLVMVMVTTVLSVVAWITITFFGDSVKNVFDKETNETYTVEIPRLPIKALYPWDAMSGVPYFFSFVYQAYFLLFSMCQANLADVMFCSWLLFTCEQLQHLKGIMRPLMELSASLDTYRPNSAALFRAASAGSKAELILNEEKDPDTKDFDLNGIYNSKADWGAQFRAPSTLQTFNDNNGMNGNPNGLTKKQELMVRSAIKYWVERHKHVVRLVSAIGETYGAALLLHMLTSTIKLTLLAYQATKIDALNVYGLTVIGYLVYALAQVFLFCIFGNRLIEESSSVMEAAYSCHWYDGSEEAKTFVQIVCQQCQKAMTISGAKFFTVSLDLFASVLGAVVTYFMVLVQLK.

The Cytoplasmic portion of the chain corresponds to 1–43 (MHVQPTKYHGLVLDLMPNIRLMQGFGHFLFRYVSGPVLIRKLY). The chain crosses the membrane as a helical span at residues 44-64 (SWWNLIMILLQYFAIMGNLVM). Over 65–73 (NTGDVNELT) the chain is Extracellular. Residues 74-94 (ANTITTLFFTHSVTKFIYVAV) form a helical membrane-spanning segment. The Cytoplasmic segment spans residues 95–133 (NSEHFYRTLGIWNQPNSHSLFAESDARYHSIALAKMRKL). A helical membrane pass occupies residues 134-154 (LVMVMVTTVLSVVAWITITFF). Residues 155 to 187 (GDSVKNVFDKETNETYTVEIPRLPIKALYPWDA) lie on the Extracellular side of the membrane. An N-linked (GlcNAc...) asparagine glycan is attached at Asn-167. A helical membrane pass occupies residues 188-208 (MSGVPYFFSFVYQAYFLLFSM). Residues 209–344 (CQANLADVMF…VERHKHVVRL (136 aa)) are Cytoplasmic-facing. A helical membrane pass occupies residues 345–365 (VSAIGETYGAALLLHMLTSTI). The Extracellular segment spans residues 366–383 (KLTLLAYQATKIDALNVY). Residues 384–404 (GLTVIGYLVYALAQVFLFCIF) traverse the membrane as a helical segment. Over 405 to 455 (GNRLIEESSSVMEAAYSCHWYDGSEEAKTFVQIVCQQCQKAMTISGAKFFT) the chain is Cytoplasmic. The helical transmembrane segment at 456 to 476 (VSLDLFASVLGAVVTYFMVLV) threads the bilayer. The Extracellular segment spans residues 477-479 (QLK).

Belongs to the insect chemoreceptor superfamily. Heteromeric odorant receptor channel (TC 1.A.69) family. Orco subfamily. As to quaternary structure, heterodimer with conventional odorant receptors (ORs). Expressed in female antenna, maxillary palp and proboscis. Not detected in male tissues.

It localises to the cell membrane. Functionally, odorant coreceptor which complexes with conventional odorant receptors (ORs) to form odorant-sensing units, providing sensitive and prolonged odorant signaling and calcium permeability. Orco is a universal and integral part of the functional odorant receptor, involved in the dendritic localization of other olfactory receptors. Required for detecting a host for blood feeding. Plays a key role in preferred attraction of females for humans over non-human hosts for blood feeding. The protein is Odorant receptor coreceptor of Aedes albopictus (Asian tiger mosquito).